Consider the following 183-residue polypeptide: Glutathione-regulated potassium-efflux system ancillary protein KefG (183 aa).

It belongs to the NAD(P)H dehydrogenase (quinone) family. KefG subfamily. Interacts with KefB.

It is found in the cell inner membrane. The catalysed reaction is a quinone + NADH + H(+) = a quinol + NAD(+). It catalyses the reaction a quinone + NADPH + H(+) = a quinol + NADP(+). Regulatory subunit of a potassium efflux system that confers protection against electrophiles. Required for full activity of KefB. This chain is Glutathione-regulated potassium-efflux system ancillary protein KefG, found in Salmonella enteritidis PT4 (strain P125109).